The sequence spans 435 residues: 3-phosphoshikimate 1-carboxyvinyltransferase (435 aa).

The 3-phosphoshikimate site is built by Lys-22, Ser-23, and Arg-27. Lys-22 provides a ligand contact to phosphoenolpyruvate. Phosphoenolpyruvate-binding residues include Gly-94 and Arg-122. Residues Ser-166, Gln-168, Asp-314, and Lys-341 each contribute to the 3-phosphoshikimate site. Position 168 (Gln-168) interacts with phosphoenolpyruvate. Residue Asp-314 is the Proton acceptor of the active site. Phosphoenolpyruvate is bound by residues Arg-345 and Arg-388.

The protein belongs to the EPSP synthase family. In terms of assembly, monomer.

The protein localises to the cytoplasm. It carries out the reaction 3-phosphoshikimate + phosphoenolpyruvate = 5-O-(1-carboxyvinyl)-3-phosphoshikimate + phosphate. It participates in metabolic intermediate biosynthesis; chorismate biosynthesis; chorismate from D-erythrose 4-phosphate and phosphoenolpyruvate: step 6/7. Functionally, catalyzes the transfer of the enolpyruvyl moiety of phosphoenolpyruvate (PEP) to the 5-hydroxyl of shikimate-3-phosphate (S3P) to produce enolpyruvyl shikimate-3-phosphate and inorganic phosphate. This is 3-phosphoshikimate 1-carboxyvinyltransferase from Vesicomyosocius okutanii subsp. Calyptogena okutanii (strain HA).